A 424-amino-acid polypeptide reads, in one-letter code: Serine--tRNA ligase (424 aa).

233 to 235 (TAE) contacts L-serine. 264 to 266 (RRE) contributes to the ATP binding site. Glu-287 provides a ligand contact to L-serine. 351 to 354 (EISS) is an ATP binding site. Residue Ser-386 coordinates L-serine.

Belongs to the class-II aminoacyl-tRNA synthetase family. Type-1 seryl-tRNA synthetase subfamily. Homodimer. The tRNA molecule binds across the dimer.

It is found in the cytoplasm. It catalyses the reaction tRNA(Ser) + L-serine + ATP = L-seryl-tRNA(Ser) + AMP + diphosphate + H(+). The catalysed reaction is tRNA(Sec) + L-serine + ATP = L-seryl-tRNA(Sec) + AMP + diphosphate + H(+). The protein operates within aminoacyl-tRNA biosynthesis; selenocysteinyl-tRNA(Sec) biosynthesis; L-seryl-tRNA(Sec) from L-serine and tRNA(Sec): step 1/1. In terms of biological role, catalyzes the attachment of serine to tRNA(Ser). Is also able to aminoacylate tRNA(Sec) with serine, to form the misacylated tRNA L-seryl-tRNA(Sec), which will be further converted into selenocysteinyl-tRNA(Sec). The chain is Serine--tRNA ligase from Petrotoga mobilis (strain DSM 10674 / SJ95).